Reading from the N-terminus, the 252-residue chain is Phosphate import ATP-binding protein PstB (252 aa).

Residues 5–247 (MRGQDVKVFY…PKEQRTQDYI (243 aa)) enclose the ABC transporter domain. 37-44 (GPSGCGKS) provides a ligand contact to ATP.

The protein belongs to the ABC transporter superfamily. Phosphate importer (TC 3.A.1.7) family. In terms of assembly, the complex is composed of two ATP-binding proteins (PstB), two transmembrane proteins (PstC and PstA) and a solute-binding protein (PstS).

Its subcellular location is the cell inner membrane. The catalysed reaction is phosphate(out) + ATP + H2O = ADP + 2 phosphate(in) + H(+). In terms of biological role, part of the ABC transporter complex PstSACB involved in phosphate import. Responsible for energy coupling to the transport system. This chain is Phosphate import ATP-binding protein PstB, found in Bartonella henselae (strain ATCC 49882 / DSM 28221 / CCUG 30454 / Houston 1) (Rochalimaea henselae).